We begin with the raw amino-acid sequence, 142 residues long: Nucleoside diphosphate kinase (142 aa).

ATP contacts are provided by lysine 11, phenylalanine 59, arginine 87, threonine 93, arginine 104, and asparagine 114. Histidine 117 acts as the Pros-phosphohistidine intermediate in catalysis.

It belongs to the NDK family. In terms of assembly, homotetramer. The cofactor is Mg(2+).

It is found in the cytoplasm. The catalysed reaction is a 2'-deoxyribonucleoside 5'-diphosphate + ATP = a 2'-deoxyribonucleoside 5'-triphosphate + ADP. The enzyme catalyses a ribonucleoside 5'-diphosphate + ATP = a ribonucleoside 5'-triphosphate + ADP. Functionally, major role in the synthesis of nucleoside triphosphates other than ATP. The ATP gamma phosphate is transferred to the NDP beta phosphate via a ping-pong mechanism, using a phosphorylated active-site intermediate. This is Nucleoside diphosphate kinase from Hahella chejuensis (strain KCTC 2396).